Here is a 435-residue protein sequence, read N- to C-terminus: Methylenetetrahydrofolate--tRNA-(uracil-5-)-methyltransferase TrmFO (435 aa).

An FAD-binding site is contributed by 9 to 14; the sequence is GAGLAG.

This sequence belongs to the MnmG family. TrmFO subfamily. The cofactor is FAD.

The protein resides in the cytoplasm. It carries out the reaction uridine(54) in tRNA + (6R)-5,10-methylene-5,6,7,8-tetrahydrofolate + NADH + H(+) = 5-methyluridine(54) in tRNA + (6S)-5,6,7,8-tetrahydrofolate + NAD(+). The enzyme catalyses uridine(54) in tRNA + (6R)-5,10-methylene-5,6,7,8-tetrahydrofolate + NADPH + H(+) = 5-methyluridine(54) in tRNA + (6S)-5,6,7,8-tetrahydrofolate + NADP(+). Its function is as follows. Catalyzes the folate-dependent formation of 5-methyl-uridine at position 54 (M-5-U54) in all tRNAs. In Staphylococcus epidermidis (strain ATCC 35984 / DSM 28319 / BCRC 17069 / CCUG 31568 / BM 3577 / RP62A), this protein is Methylenetetrahydrofolate--tRNA-(uracil-5-)-methyltransferase TrmFO.